Consider the following 107-residue polypeptide: MKWIVIDTVIQPTCGISFSAIWGNMKMIIWYQSTIFLPPGSIFTPVKSGIILKDKEYPITIYHIAPFNKDLWSLLKSSQECPPGESKITNKCLHNSCIIKICPYGLK.

Belongs to the IraM/RssC family.

Its subcellular location is the cytoplasm. Inhibits RpoS proteolysis by regulating RssB activity, thereby increasing the stability of the sigma stress factor RpoS during magnesium starvation. The chain is Anti-adapter protein IraM from Escherichia coli (strain K12 / MC4100 / BW2952).